A 359-amino-acid polypeptide reads, in one-letter code: Putative nucleotidyltransferase MAB21L1 (359 aa).

A ribonucleoside 5'-triphosphate is bound by residues 23 to 24 (RK) and 63 to 66 (FEGL). The Mg(2+) site is built by E73 and E75. Residues K248 and 252–255 (SLLK) contribute to the a ribonucleoside 5'-triphosphate site.

The protein belongs to the mab-21 family. Monomer. Homodecamer; composed of 2 back to back homopentamers. The protein may exist as monomer in solution and oiligomerizes upon ligand binding.

It localises to the nucleus. Putative nucleotidyltransferase required for several aspects of embryonic development including normal development of the eye. It is unclear whether it displays nucleotidyltransferase activity in vivo. Binds single-stranded RNA (ssRNA). The sequence is that of Putative nucleotidyltransferase MAB21L1 (mab21l1) from Danio rerio (Zebrafish).